The primary structure comprises 81 residues: Small ribosomal subunit protein bS16c (81 aa).

This sequence belongs to the bacterial ribosomal protein bS16 family.

It is found in the plastid. It localises to the chloroplast. This chain is Small ribosomal subunit protein bS16c, found in Emiliania huxleyi (Coccolithophore).